We begin with the raw amino-acid sequence, 477 residues long: Acetolactate synthase small subunit 2, chloroplastic (477 aa).

The transit peptide at 1–53 (MAATTTATSLFSSRLHFQNQNQGYGFPAKTPNSLQVNQIIDGRKMRNATVLSA) directs the protein to the chloroplast. 2 ACT domains span residues 78-150 (TISV…DLSK) and 309-383 (TLSL…NITH). Positions 85, 89, 90, 103, 104, 316, 320, 321, 334, and 335 each coordinate L-valine.

The protein belongs to the acetolactate synthase small subunit family. As to quaternary structure, the acetolactate synthase complex contains 4 homodimers of the large catalytic subunits, and 1 homotetramer of the small regulatory subunits. In terms of tissue distribution, expressed in roots in the vascular tissuem in cells around the quiescent center, in floral organs at the tips of young siliques and in the joint region between the silique and the pedicel. Barely detectable in mature leaves or siliques.

The protein resides in the plastid. The protein localises to the chloroplast. It is found in the peroxisome. It participates in amino-acid biosynthesis; L-isoleucine biosynthesis; L-isoleucine from 2-oxobutanoate: step 1/4. Its pathway is amino-acid biosynthesis; L-valine biosynthesis; L-valine from pyruvate: step 1/4. Its function is as follows. Regulatory subunit of acetohydroxy-acid synthase. Involved in the feed-back inhibition by branched-chain amino acids but not in herbicide tolerance. May play a role in valine and isoleucine-mediated feedback inhibition in roots. In vitro, inhibited by valine, but not leucine or isoleucine. Required for reproductive development and sodium homeostasis. The chain is Acetolactate synthase small subunit 2, chloroplastic from Arabidopsis thaliana (Mouse-ear cress).